A 104-amino-acid polypeptide reads, in one-letter code: UPF0473 protein LGAS_0424 (104 aa).

This sequence belongs to the UPF0473 family.

The polypeptide is UPF0473 protein LGAS_0424 (Lactobacillus gasseri (strain ATCC 33323 / DSM 20243 / BCRC 14619 / CIP 102991 / JCM 1131 / KCTC 3163 / NCIMB 11718 / NCTC 13722 / AM63)).